A 125-amino-acid chain; its full sequence is Large ribosomal subunit protein bL12 (125 aa).

The protein belongs to the bacterial ribosomal protein bL12 family. As to quaternary structure, homodimer. Part of the ribosomal stalk of the 50S ribosomal subunit. Forms a multimeric L10(L12)X complex, where L10 forms an elongated spine to which 2 to 4 L12 dimers bind in a sequential fashion. Binds GTP-bound translation factors.

In terms of biological role, forms part of the ribosomal stalk which helps the ribosome interact with GTP-bound translation factors. Is thus essential for accurate translation. The chain is Large ribosomal subunit protein bL12 from Anaeromyxobacter sp. (strain Fw109-5).